The following is a 408-amino-acid chain: Bone morphogenetic protein 4 (408 aa).

The first 19 residues, 1-19 (MIPGNRMLMVVLLCQVLLG), serve as a signal peptide directing secretion. Residues 20 to 292 (GATDASLIPE…HTLTRRRAKR (273 aa)) constitute a propeptide that is removed on maturation. At Ser91 the chain carries Phosphoserine. The interval 91–113 (SGEEEEEEQSQGTGLEYPERPAS) is disordered. N-linked (GlcNAc...) asparagine glycosylation is found at Asn144 and Asn209. The disordered stretch occupies residues 281–307 (RGHTLTRRRAKRSPKHHPQRSRKKNKN). Residues 284-307 (TLTRRRAKRSPKHHPQRSRKKNKN) are compositionally biased toward basic residues. Intrachain disulfides connect Cys308-Cys373, Cys337-Cys405, and Cys341-Cys407. Asn350 and Asn365 each carry an N-linked (GlcNAc...) asparagine glycan.

This sequence belongs to the TGF-beta family. As to quaternary structure, homodimer; disulfide-linked. Interacts with GREM2. Part of a complex consisting of TWSG1 and CHRD. Interacts with the serine proteases, HTRA1 and HTRA3; the interaction with either inhibits BMP4-mediated signaling. The HTRA protease activity is required for this inhibition. Interacts with SOSTDC1. Interacts with FBN1 (via N-terminal domain) and FBN2. Interacts with type I receptor BMPR1A. Interacts with type II receptor BMPR2. Interacts with FSTL1; this interaction inhibits the activation of the BMP4/Smad1/5/8 signaling pathway. Interacts with SCUBE3. Interacts with TGFBR3.

It is found in the secreted. The protein localises to the extracellular space. The protein resides in the extracellular matrix. Its function is as follows. Growth factor of the TGF-beta superfamily that plays essential roles in many developmental processes, including neurogenesis, vascular development, angiogenesis and osteogenesis. Acts in concert with PTHLH/PTHRP to stimulate ductal outgrowth during embryonic mammary development and to inhibit hair follicle induction. Initiates the canonical BMP signaling cascade by associating with type I receptor BMPR1A and type II receptor BMPR2. Once all three components are bound together in a complex at the cell surface, BMPR2 phosphorylates and activates BMPR1A. In turn, BMPR1A propagates signal by phosphorylating SMAD1/5/8 that travel to the nucleus and act as activators and repressors of transcription of target genes. Positively regulates the expression of odontogenic development regulator MSX1 via inducing the IPO7-mediated import of SMAD1 to the nucleus. Required for MSX1-mediated mesenchymal molar tooth bud development beyond the bud stage, via promoting Wnt signaling. Acts as a positive regulator of odontoblast differentiation during mesenchymal tooth germ formation, expression is repressed during the bell stage by MSX1-mediated inhibition of CTNNB1 signaling. Able to induce its own expression in dental mesenchymal cells and also in the neighboring dental epithelial cells via an MSX1-mediated pathway. Can also signal through non-canonical BMP pathways such as ERK/MAP kinase, PI3K/Akt, or SRC cascades. For example, induces SRC phosphorylation which, in turn, activates VEGFR2, leading to an angiogenic response. This chain is Bone morphogenetic protein 4, found in Rattus norvegicus (Rat).